The chain runs to 1842 residues: Fatty acid synthase subunit alpha (1842 aa).

Residues 101 to 141 (PAEAPASTSSTPKVETAAAAAPAATPAPAPAQTSAPAAALP) are disordered. A compositionally biased stretch (low complexity) spans 116 to 139 (TAAAAAPAATPAPAPAQTSAPAAA). Residues 145–220 (PKALEVLHTL…AIMQSSFNGS (76 aa)) enclose the Carrier domain. Residue Ser-180 is modified to O-(pantetheine 4'-phosphoryl)serine. Ser-604 carries the phosphoserine modification. In terms of domain architecture, Ketosynthase family 3 (KS3) spans 1079–1616 (LQEVVIDHDL…QVGGQVIVIH (538 aa)). Cys-1262 functions as the For beta-ketoacyl synthase activity in the catalytic mechanism. A disordered region spans residues 1304-1332 (GATSNAAKETERGRTPQEMSRPATSTRDG). Residue Ser-1412 is modified to Phosphoserine. Catalysis depends on for beta-ketoacyl synthase activity residues His-1501 and His-1542. The Mg(2+) site is built by Asp-1728, Val-1729, and Glu-1730. Acetyl-CoA is bound by residues 1728–1730 (DVE), Tyr-1754, Ser-1764, 1773–1783 (EAVFKSLGISG), 1797–1800 (SSES), and 1827–1829 (ISH). Residues Ser-1828 and His-1829 each contribute to the Mg(2+) site.

Belongs to the thiolase-like superfamily. Fungal fatty acid synthetase subunit alpha family. In terms of assembly, [Alpha(6)beta(6)] hexamers of two multifunctional subunits (alpha and beta).

It catalyses the reaction acetyl-CoA + n malonyl-CoA + 2n NADPH + 4n H(+) = a long-chain-acyl-CoA + n CoA + n CO2 + 2n NADP(+).. The catalysed reaction is a fatty acyl-[ACP] + malonyl-[ACP] + H(+) = a 3-oxoacyl-[ACP] + holo-[ACP] + CO2. It carries out the reaction a (3R)-hydroxyacyl-[ACP] + NADP(+) = a 3-oxoacyl-[ACP] + NADPH + H(+). Functionally, fatty acid synthetase catalyzes the formation of long-chain fatty acids from acetyl-CoA, malonyl-CoA and NADPH. The alpha subunit contains domains for: acyl carrier protein, 3-oxoacyl-[acyl-carrier-protein] reductase, and 3-oxoacyl-[acyl-carrier-protein] synthase. This subunit coordinates the binding of the six beta subunits to the enzyme complex. This Schizosaccharomyces pombe (strain 972 / ATCC 24843) (Fission yeast) protein is Fatty acid synthase subunit alpha (fas2).